A 259-amino-acid chain; its full sequence is Global transcriptional regulator CodY (259 aa).

The segment at 1–155 (MALLQKTRII…GATVVGMEIL (155 aa)) is GAF domain. Positions 203 to 222 (ASKIADRVGITRSVIVNALR) form a DNA-binding region, H-T-H motif. S215 carries the post-translational modification Phosphoserine.

The protein belongs to the CodY family.

The protein resides in the cytoplasm. DNA-binding global transcriptional regulator which is involved in the adaptive response to starvation and acts by directly or indirectly controlling the expression of numerous genes in response to nutrient availability. During rapid exponential growth, CodY is highly active and represses genes whose products allow adaptation to nutrient depletion. The sequence is that of Global transcriptional regulator CodY from Bacillus velezensis (strain DSM 23117 / BGSC 10A6 / LMG 26770 / FZB42) (Bacillus amyloliquefaciens subsp. plantarum).